The following is a 186-amino-acid chain: Inosine/xanthosine triphosphatase (186 aa).

Gln-75 provides a ligand contact to Mg(2+).

This sequence belongs to the YjjX NTPase family. In terms of assembly, homodimer. Mg(2+) is required as a cofactor. The cofactor is Mn(2+).

It carries out the reaction XTP + H2O = XDP + phosphate + H(+). It catalyses the reaction ITP + H2O = IDP + phosphate + H(+). In terms of biological role, phosphatase that hydrolyzes non-canonical purine nucleotides such as XTP and ITP to their respective diphosphate derivatives. Probably excludes non-canonical purines from DNA/RNA precursor pool, thus preventing their incorporation into DNA/RNA and avoiding chromosomal lesions. This chain is Inosine/xanthosine triphosphatase, found in Shewanella baltica (strain OS185).